A 350-amino-acid polypeptide reads, in one-letter code: 3-dehydroquinate synthase (350 aa).

NAD(+) contacts are provided by residues 106–110 (GVVGD), 130–131 (TS), K143, and K152. Residues E185, H246, and H263 each coordinate Zn(2+).

This sequence belongs to the sugar phosphate cyclases superfamily. Dehydroquinate synthase family. NAD(+) serves as cofactor. The cofactor is Co(2+). Zn(2+) is required as a cofactor.

Its subcellular location is the cytoplasm. It catalyses the reaction 7-phospho-2-dehydro-3-deoxy-D-arabino-heptonate = 3-dehydroquinate + phosphate. It participates in metabolic intermediate biosynthesis; chorismate biosynthesis; chorismate from D-erythrose 4-phosphate and phosphoenolpyruvate: step 2/7. Catalyzes the conversion of 3-deoxy-D-arabino-heptulosonate 7-phosphate (DAHP) to dehydroquinate (DHQ). In Clostridium perfringens (strain 13 / Type A), this protein is 3-dehydroquinate synthase.